The chain runs to 236 residues: Carbonyl reductase family member 4 (236 aa).

NADP(+) is bound by residues 11–14 (SRGI), 34–35 (RD), Asp-55, and 82–84 (SAG). Ser-134 contributes to the substrate binding site. NADP(+)-binding positions include Tyr-147, Lys-151, and 180–182 (IHT). Residue Tyr-147 is the Proton acceptor of the active site.

Belongs to the short-chain dehydrogenases/reductases (SDR) family. In terms of assembly, homotetramer (in vitro). Heterotetramer with HSD17B8; contains two molecules each of HSD17B8 and CBR4.

It localises to the mitochondrion matrix. The protein operates within lipid metabolism; fatty acid biosynthesis. Its function is as follows. The heterotetramer with HSD17B8 has NADH-dependent 3-ketoacyl-acyl carrier protein reductase activity, and thereby plays a role in mitochondrial fatty acid biosynthesis. Within the heterotetramer, HSD17B8 binds NADH; CBR4 binds NADPD. The homotetramer has NADPH-dependent quinone reductase activity. Both homotetramer and the heterotetramer have broad in vitro substrate specificity and can reduce 9,10-phenanthrenequinone, 1,4-benzoquinone and various other o-quinones and p-quinones. This Xenopus tropicalis (Western clawed frog) protein is Carbonyl reductase family member 4 (cbr4).